Consider the following 852-residue polypeptide: MMVDCQSSTQEIGEELINGVIYSISLRKVQLHQGATKGQRWLGCENESALNLYETCKVRTVKAGTLEKLVEHLVPAFQGSDLSYVTVFLCTYRAFTTTQQVLDLLFKRYGRCDALTASSRYGCILPYSSEDGGPQDQLKNAISSILGTWLDQYSEDFCQPPDFPCLKQLVAYVQLNMPGSDLERRAHLLLAQLEDLEPSEAESEALSPAPVLSLKPASQLEPALLLTPSQVVTSTPVREPAAAPVPVLASSPVVAPAPELEPVPEPPQEPEPSLALAPELEPAVSQSLELESAPVPTPALEPSWSLPEATENGLTEKPHLLLFPPDLVAEQFTLMDAELFKKVVPYHCLGSIWSQRDKKGKEHLAPTIRATVAQFNNVANCVITTCLGDQSMKAPDRARVVEHWIEVARECRALKNFSSLYAILSALQSNAIHRLKKTWEEVSRDSFRVFQKLSEIFSDENNYSLSRELLIKEGTSKFATLEMNPRRAQRRQKETGVIQGTVPYLGTFLTDLVMLDTAMKDYLYGRLINFEKRRKEFEVIAQIKLLQSACNNYSIAPEEHFGTWFRAMERLSEAESYTLSCELEPPSESASNTLRSKKSTAIVKRWSDRQAPSTELSTSSSAHSKSCDQLRCSPYLGSGDITDALSVHSAGSSSSDVEEINMSFVPESPDGQEKKFWESASQSSPETSGISSASSSTSSSSASTTPVSTTRTHKRSVSGVCSYSSSLPLYNQQVGDCCIIRVSLDVDNGNMYKSILVTSQDKAPTVIRKAMDKHNLDEDEPEDYELVQIISEDHKLKIPENANVFYAMNSTANYDFILKKRTFTKGAKVKHGASSTLPRMKQKGLRIAKGIF.

The region spanning 57 to 194 (KVRTVKAGTL…RAHLLLAQLE (138 aa)) is the N-terminal Ras-GEF domain. The region spanning 324–586 (PPDLVAEQFT…YTLSCELEPP (263 aa)) is the Ras-GEF domain. Disordered regions lie at residues 606 to 627 (WSDR…SKSC) and 665 to 711 (VPES…STTR). Composition is skewed to low complexity over residues 613-624 (STELSTSSSAHS) and 683-710 (SSPE…VSTT). Residues 736 to 823 (DCCIIRVSLD…YDFILKKRTF (88 aa)) form the Ras-associating domain. Tyrosine 752 is modified (phosphotyrosine).

In terms of assembly, interacts with RIT1 and RIT2. Interacts with OOG1. Interacts with TRAF3. Interacts with HRAS. Phosphorylation of Tyr-752 by MET blocks HRAS binding.

The protein localises to the cytoplasm. The protein resides in the nucleus. Functionally, functions as a guanine nucleotide exchange factor (GEF) activating either RalA or RalB GTPases and plays an important role in intracellular transport. Interacts and acts as an effector molecule for R-Ras, H-Ras, K-Ras, and Rap. During bacterial clearance, recognizes 'Lys-33'-linked polyubiquitinated TRAF3 and subsequently mediates assembly of the exocyst complex. The protein is Ral guanine nucleotide dissociation stimulator (Ralgds) of Mus musculus (Mouse).